The following is an 816-amino-acid chain: H(+)/Cl(-) exchange transporter 5 (816 aa).

Topologically, residues 1–124 (MAMWQGAMDN…WALIHSVSDA (124 aa)) are cytoplasmic. The next 2 helical transmembrane spans lie at 125-162 (FSGWLLMLLIGLLSGSLAGLIDISAHWMTDLKEGICTG) and 208-231 (VNYFMYVLWALLFAFLAVSLVKAF). Residues 237 to 241 (GSGIP) carry the Selectivity filter part_1 motif. Ser-238 lines the chloride pocket. Positions 240–247 (IPEIKTIL) form an intramembrane region, helical. 2 helical membrane passes run 256–275 (LGKWTLVIKTITLVLAVSSG) and 281–300 (EGPLVHVACCCGNILCHCFN). A Selectivity filter part_2 motif is present at residues 279 to 283 (GKEGP). 2 consecutive intramembrane regions (helical) follow at residues 312–324 (VLSAAAAAGVSVA) and 328–336 (PIGGVLFSL). A run of 5 helical transmembrane segments spans residues 348-366 (LWRSFFAALVAAFTLRSIN), 389-414 (LVPFIVLGIFGGLWGALFIRTNIAWC), 422-442 (LGKYPVVEVLIVTAITAILAF), 498-518 (MWQLALTLILKIVITIFTFGM), and 523-542 (GLFIPSMAVGAIAGRLLGVG). The Selectivity filter part_3 motif lies at 523 to 527 (GLFIP). Chloride is bound at residue Phe-525. Positions 570–584 (GLYAMVGAAACLGGV) form an intramembrane region, helical. Positions 585–587 (TRM) form an intramembrane region, note=Loop between two helices. An intramembrane region (helical) is located at residues 588 to 599 (TVSLVVIMFELT). An intramembrane region (note=Loop between two helices) is located at residues 600-604 (GGLEY). Residues 605-622 (IVPLMAAAMTSKWVADAL) traverse the membrane as a helical segment. Over 623-816 (GREGIYDAHI…NQDPESILFN (194 aa)) the chain is Cytoplasmic. Residue Tyr-628 coordinates chloride. CBS domains follow at residues 656 to 720 (MKPR…ARKK) and 752 to 811 (ILDL…QDPE). ATP-binding positions include Thr-666, 687 to 689 (YSG), and 794 to 797 (TKKD).

The protein belongs to the chloride channel (TC 2.A.49) family. ClC-5/CLCN5 subfamily. Interacts with NEDD4 and NEDD4L. Ubiquitinated by NEDD4L in the presence of albumin; which promotes endocytosis and proteasomal degradation. Kidney specific.

The protein resides in the golgi apparatus membrane. It localises to the endosome membrane. It is found in the cell membrane. It carries out the reaction 2 chloride(in) + H(+)(out) = 2 chloride(out) + H(+)(in). In terms of biological role, proton-coupled chloride transporter. Functions as antiport system and exchanges chloride ions against protons. Important for normal acidification of the endosome lumen. May play an important role in renal tubular function. The CLC channel family contains both chloride channels and proton-coupled anion transporters that exchange chloride or another anion for protons. The absence of conserved gating glutamate residues is typical for family members that function as channels. The chain is H(+)/Cl(-) exchange transporter 5 (Clcn5) from Rattus norvegicus (Rat).